A 434-amino-acid chain; its full sequence is Probable glycine dehydrogenase (decarboxylating) subunit 1 (434 aa).

It belongs to the GcvP family. N-terminal subunit subfamily. As to quaternary structure, the glycine cleavage system is composed of four proteins: P, T, L and H. In this organism, the P 'protein' is a heterodimer of two subunits.

The enzyme catalyses N(6)-[(R)-lipoyl]-L-lysyl-[glycine-cleavage complex H protein] + glycine + H(+) = N(6)-[(R)-S(8)-aminomethyldihydrolipoyl]-L-lysyl-[glycine-cleavage complex H protein] + CO2. Functionally, the glycine cleavage system catalyzes the degradation of glycine. The P protein binds the alpha-amino group of glycine through its pyridoxal phosphate cofactor; CO(2) is released and the remaining methylamine moiety is then transferred to the lipoamide cofactor of the H protein. The protein is Probable glycine dehydrogenase (decarboxylating) subunit 1 of Thermoplasma volcanium (strain ATCC 51530 / DSM 4299 / JCM 9571 / NBRC 15438 / GSS1).